The chain runs to 256 residues: Protein N-terminal and lysine N-methyltransferase EFM7 (256 aa).

The disordered stretch occupies residues 1 to 26; the sequence is MSDTESLNDALGLFDEPEDFRPEKPK. S-adenosyl-L-methionine contacts are provided by residues Trp64, 90–92, Asp112, Trp145, and Ser168; that span reads GAA.

Belongs to the class I-like SAM-binding methyltransferase superfamily. EFM7 family.

It is found in the cytoplasm. Functionally, S-adenosyl-L-methionine-dependent protein methyltransferase that trimethylates the N-terminal glycine 'Gly-2' of elongation factor 1-alpha, before also catalyzing the mono- and dimethylation of 'Lys-3'. The sequence is that of Protein N-terminal and lysine N-methyltransferase EFM7 from Candida glabrata (strain ATCC 2001 / BCRC 20586 / JCM 3761 / NBRC 0622 / NRRL Y-65 / CBS 138) (Yeast).